The sequence spans 481 residues: Beta-1,3-glucan-binding protein (481 aa).

The first 18 residues, Arg-1–Gly-18, serve as a signal peptide directing secretion. One can recognise a CBM39 domain in the interval Tyr-20–Asp-120. Residue Asn-110 is glycosylated (N-linked (GlcNAc...) asparagine). Positions Thr-124 to Leu-481 constitute a GH16 domain.

This sequence belongs to the insect beta-1,3-glucan binding protein family.

Its subcellular location is the secreted. Functionally, involved in the recognition of invading microorganisms. Binds specifically to beta-1,3-glucan and activates the phenoloxidase cascade. The chain is Beta-1,3-glucan-binding protein from Hyphantria cunea (Fall webworm moth).